We begin with the raw amino-acid sequence, 120 residues long: Flagellar protein FliT (120 aa).

Positions 1 to 50 (MNDSSLSLKKWHALSALSNTMLSLAQSGKWDELIEQEVAYVSLVEKISIT) are required for homodimerization. A fliD binding region spans residues 59–97 (IQDQAMVMLNNVLQNEMTLKTLLQERMDELHGLMAQTGK).

It belongs to the FliT family. Homodimer. Interacts with FliD and FlhC.

It is found in the cytoplasm. Its subcellular location is the cytosol. Functionally, dual-function protein that regulates the transcription of class 2 flagellar operons and that also acts as an export chaperone for the filament-capping protein FliD. As a transcriptional regulator, acts as an anti-FlhDC factor; it directly binds FlhC, thus inhibiting the binding of the FlhC/FlhD complex to class 2 promoters, resulting in decreased expression of class 2 flagellar operons. As a chaperone, effects FliD transition to the membrane by preventing its premature polymerization, and by directing it to the export apparatus. This chain is Flagellar protein FliT, found in Enterobacter sp. (strain 638).